Reading from the N-terminus, the 57-residue chain is Large ribosomal subunit protein bL32 (57 aa).

A compositionally biased stretch (basic residues) spans 1 to 19 (MAVPKRRMSRSNTRSRRSQ). Residues 1-22 (MAVPKRRMSRSNTRSRRSQWKA) are disordered.

This sequence belongs to the bacterial ribosomal protein bL32 family.

This Rhodococcus jostii (strain RHA1) protein is Large ribosomal subunit protein bL32.